The following is a 158-amino-acid chain: NAD(P)H-quinone oxidoreductase subunit J, chloroplastic (158 aa).

This sequence belongs to the complex I 30 kDa subunit family. In terms of assembly, NDH is composed of at least 16 different subunits, 5 of which are encoded in the nucleus.

It localises to the plastid. The protein resides in the chloroplast thylakoid membrane. The catalysed reaction is a plastoquinone + NADH + (n+1) H(+)(in) = a plastoquinol + NAD(+) + n H(+)(out). It catalyses the reaction a plastoquinone + NADPH + (n+1) H(+)(in) = a plastoquinol + NADP(+) + n H(+)(out). Its function is as follows. NDH shuttles electrons from NAD(P)H:plastoquinone, via FMN and iron-sulfur (Fe-S) centers, to quinones in the photosynthetic chain and possibly in a chloroplast respiratory chain. The immediate electron acceptor for the enzyme in this species is believed to be plastoquinone. Couples the redox reaction to proton translocation, and thus conserves the redox energy in a proton gradient. The protein is NAD(P)H-quinone oxidoreductase subunit J, chloroplastic of Buxus microphylla (Littleleaf boxwood).